Here is a 586-residue protein sequence, read N- to C-terminus: Scavenger receptor cysteine-rich domain-containing group B protein (586 aa).

The interval 1–33 (MGPSERPSIGWTPKEAEMQIGPQPDGWSRGWKP) is disordered. A signal peptide spans 1–58 (MGPSERPSIGWTPKEAEMQIGPQPDGWSRGWKPGDRGAVPLPLSPALSFLLLFPLASA). SRCR domains are found at residues 69 to 169 (LRLV…VLCD), 200 to 300 (VRLV…VLCA), 355 to 455 (LRLV…ALCA), and 484 to 584 (LRLA…VLCQ). 12 disulfide bridges follow: cysteine 94–cysteine 158, cysteine 107–cysteine 168, cysteine 138–cysteine 148, cysteine 225–cysteine 289, cysteine 238–cysteine 299, cysteine 269–cysteine 279, cysteine 380–cysteine 444, cysteine 393–cysteine 454, cysteine 424–cysteine 434, cysteine 509–cysteine 573, cysteine 522–cysteine 583, and cysteine 553–cysteine 563.

The protein resides in the secreted. This chain is Scavenger receptor cysteine-rich domain-containing group B protein, found in Mus musculus (Mouse).